We begin with the raw amino-acid sequence, 69 residues long: Cytochrome c oxidase subunit 8A, mitochondrial (69 aa).

The transit peptide at 1-25 (MSVLTSLLLRGLTGSARRLPVPRAK) directs the protein to the mitochondrion. The Mitochondrial matrix portion of the chain corresponds to 26–36 (VHSMPPEEELG). A helical membrane pass occupies residues 37–60 (IMEKAIGLTFCFVSLFLPAGWILS). Topologically, residues 61-69 (HLEDYKRPE) are mitochondrial intermembrane.

It belongs to the cytochrome c oxidase VIII family. As to quaternary structure, component of the cytochrome c oxidase (complex IV, CIV), a multisubunit enzyme composed of 14 subunits. The complex is composed of a catalytic core of 3 subunits MT-CO1, MT-CO2 and MT-CO3, encoded in the mitochondrial DNA, and 11 supernumerary subunits COX4I, COX5A, COX5B, COX6A, COX6B, COX6C, COX7A, COX7B, COX7C, COX8 and NDUFA4, which are encoded in the nuclear genome. The complex exists as a monomer or a dimer and forms supercomplexes (SCs) in the inner mitochondrial membrane with NADH-ubiquinone oxidoreductase (complex I, CI) and ubiquinol-cytochrome c oxidoreductase (cytochrome b-c1 complex, complex III, CIII), resulting in different assemblies (supercomplex SCI(1)III(2)IV(1) and megacomplex MCI(2)III(2)IV(2)). In response to mitochondrial stress, the precursor protein is ubiquitinated by the SIFI complex in the cytoplasm before mitochondrial import, leading to its degradation. Within the SIFI complex, UBR4 initiates ubiquitin chain that are further elongated or branched by KCMF1.

The protein localises to the mitochondrion inner membrane. Its pathway is energy metabolism; oxidative phosphorylation. Its function is as follows. Component of the cytochrome c oxidase, the last enzyme in the mitochondrial electron transport chain which drives oxidative phosphorylation. The respiratory chain contains 3 multisubunit complexes succinate dehydrogenase (complex II, CII), ubiquinol-cytochrome c oxidoreductase (cytochrome b-c1 complex, complex III, CIII) and cytochrome c oxidase (complex IV, CIV), that cooperate to transfer electrons derived from NADH and succinate to molecular oxygen, creating an electrochemical gradient over the inner membrane that drives transmembrane transport and the ATP synthase. Cytochrome c oxidase is the component of the respiratory chain that catalyzes the reduction of oxygen to water. Electrons originating from reduced cytochrome c in the intermembrane space (IMS) are transferred via the dinuclear copper A center (CU(A)) of subunit 2 and heme A of subunit 1 to the active site in subunit 1, a binuclear center (BNC) formed by heme A3 and copper B (CU(B)). The BNC reduces molecular oxygen to 2 water molecules using 4 electrons from cytochrome c in the IMS and 4 protons from the mitochondrial matrix. In Macaca fascicularis (Crab-eating macaque), this protein is Cytochrome c oxidase subunit 8A, mitochondrial (COX8A).